The primary structure comprises 603 residues: MENNRNFFITIALSVLILAVWQYFYVLPRSEAQREAARVEQQRVEEQKKAAEAANPGAGTPAPAPGTIPNAPGGDTVTVAGRDQALAASKRVKIDTPSLEGSINLTGARLDDLKLKHYTETVDKNSPEIELLNPQALPTGYFAEIGFVGNDKTGAVPGAETVWNVDGNPTLSPSTPVTLTYTNDKGLTFKRTFSVDANYMFTVSDTVQNSGSSAVSLFNYGRVTRYDKPAVASTYVLHEGLIGFTGTEGLQEHKYASIEKDKQYQPGKATDGWLGITDKYWAVTLVPTEKQPFQPRYAFFEDGRHRYQSDFLTDAINVEAGQSATVETEVFAGAKEVAKINAYAEDRHIKRFDLLIDWGWFHFITKPMFWLIDTLYKFLGNFGLAILATTVIVKALFFPLANKSYASMANMKKVQPKMLEIREKYADDKMKQQQAMMELYKTEKINPLAGCWPVALQIPVFFSLYKVLYITIEMRHAPFFGWIQDLAAPDPTSLFNLFGLIPVTLPHMLMIGVWPLIMGVTMFLQMRMNPTPPDPTQAAIFTWMPVIFTFMMAGFPAGLVIYWAWNNMLSILQQGVIMKRQGAKIELWDNLMALFKKKPSPAE.

Residues 7–27 (FFITIALSVLILAVWQYFYVL) traverse the membrane as a helical segment. A compositionally biased stretch (basic and acidic residues) spans 38–51 (RVEQQRVEEQKKAA). Positions 38–76 (RVEQQRVEEQKKAAEAANPGAGTPAPAPGTIPNAPGGDT) are disordered. Positions 52–74 (EAANPGAGTPAPAPGTIPNAPGG) are enriched in low complexity. 5 consecutive transmembrane segments (helical) span residues 352–372 (FDLL…FWLI), 378–398 (FLGN…ALFF), 452–472 (WPVA…YITI), 497–517 (LFGL…WPLI), and 540–560 (IFTW…AGLV).

Belongs to the OXA1/ALB3/YidC family. Type 1 subfamily. As to quaternary structure, interacts with the Sec translocase complex via SecD. Specifically interacts with transmembrane segments of nascent integral membrane proteins during membrane integration.

The protein resides in the cell inner membrane. Required for the insertion and/or proper folding and/or complex formation of integral membrane proteins into the membrane. Involved in integration of membrane proteins that insert both dependently and independently of the Sec translocase complex, as well as at least some lipoproteins. Aids folding of multispanning membrane proteins. In Mesorhizobium japonicum (strain LMG 29417 / CECT 9101 / MAFF 303099) (Mesorhizobium loti (strain MAFF 303099)), this protein is Membrane protein insertase YidC.